The chain runs to 343 residues: Heat-inducible transcription repressor HrcA (343 aa).

The protein belongs to the HrcA family.

Its function is as follows. Negative regulator of class I heat shock genes (grpE-dnaK-dnaJ and groELS operons). Prevents heat-shock induction of these operons. The protein is Heat-inducible transcription repressor HrcA of Alkaliphilus metalliredigens (strain QYMF).